Here is a 388-residue protein sequence, read N- to C-terminus: Flavin-dependent monooxygenase (388 aa).

Residues 12–15 (VGVA), 34–36 (EKS), 44–47 (QALD), arginine 105, tyrosine 267, aspartate 289, and 296–302 (PLSGQGN) contribute to the FAD site.

This sequence belongs to the aromatic-ring hydroxylase family. It depends on FAD as a cofactor.

It carries out the reaction a tetracycline + NADPH + O2 + H(+) = a (1S,10aS)-3-(CONH2)-1-(Me2N)-3,3a,4,6-(HO)4-2,5-dioxo-1H,10aH,11H,11aH-cyclopenta[b]anthracene + CO + NADP(+) + H2O. It catalyses the reaction 7-chlorotetracycline + NADPH + O2 + H(+) = (1S,10S,10aS)-3-(CONH2)-9-Cl-1-(Me2N)-3,3a,4,10-(HO)4-10-Me-2,5-dioxo-1H,10aH,11H,11aH-cyclopenta[b]anthracen-6-olate + CO + NADP(+) + H2O. With respect to regulation, inhibited by anhydrotetracycline. In terms of biological role, an FAD-requiring monooxygenase active on tetracycline antibiotic and some of its derivatives, which leads to their inactivation. Expression in E.coli confers high resistance to tetracycline and oxytetracycline, does not confer resistance to minocycline or tigecycline. Degrades tetracycline and oxytetracycline; the reaction requires NADPH. Degrades and confers resistance to chlortetracycline. The protein is Flavin-dependent monooxygenase (tet(50)) of Unknown prokaryotic organism.